Reading from the N-terminus, the 924-residue chain is Nodulation receptor kinase (924 aa).

Residues Met-1 to Ser-29 form the signal peptide. Residues Glu-361–Ser-382 are a coiled coil. LRR repeat units follow at residues Val-406–Met-428, Lys-430–Ser-452, Leu-453–Leu-475, and His-477–Asn-498. The chain crosses the membrane as a helical span at residues Phe-520–Phe-540. Residues Glu-595 to Ile-872 form the Protein kinase domain. ATP-binding positions include Ile-601–Val-609 and Lys-623. Asp-721 (proton acceptor) is an active-site residue.

It belongs to the protein kinase superfamily. Ser/Thr protein kinase family. In terms of processing, may be phosphorylated.

It is found in the membrane. It catalyses the reaction L-seryl-[protein] + ATP = O-phospho-L-seryl-[protein] + ADP + H(+). The enzyme catalyses L-threonyl-[protein] + ATP = O-phospho-L-threonyl-[protein] + ADP + H(+). Functionally, involved in the perception of symbiotic fungi and bacteria and required for the calcium spiking. Part of the perception/transduction system leading to nodulation or mycorrhizal infection. This is Nodulation receptor kinase (NORK) from Pisum sativum (Garden pea).